Reading from the N-terminus, the 188-residue chain is Elongation factor P (188 aa).

This sequence belongs to the elongation factor P family.

The protein localises to the cytoplasm. The protein operates within protein biosynthesis; polypeptide chain elongation. In terms of biological role, involved in peptide bond synthesis. Stimulates efficient translation and peptide-bond synthesis on native or reconstituted 70S ribosomes in vitro. Probably functions indirectly by altering the affinity of the ribosome for aminoacyl-tRNA, thus increasing their reactivity as acceptors for peptidyl transferase. The polypeptide is Elongation factor P (Methylorubrum populi (strain ATCC BAA-705 / NCIMB 13946 / BJ001) (Methylobacterium populi)).